The chain runs to 187 residues: Transcription antitermination protein NusB (187 aa).

The disordered stretch occupies residues 135–187 (APAPESVAEEADEESSDSDAAASDPTDEGDVSDSSGASDEPAAPSAEIQPTVD). Residues 141-151 (VAEEADEESSD) show a composition bias toward acidic residues.

It belongs to the NusB family.

Its function is as follows. Involved in transcription antitermination. Required for transcription of ribosomal RNA (rRNA) genes. Binds specifically to the boxA antiterminator sequence of the ribosomal RNA (rrn) operons. This Bifidobacterium longum subsp. infantis (strain ATCC 15697 / DSM 20088 / JCM 1222 / NCTC 11817 / S12) protein is Transcription antitermination protein NusB.